Consider the following 250-residue polypeptide: Functional amyloid sbunit FapE (250 aa).

An N-terminal signal peptide occupies residues 1-27; sequence MLREHAMYTHHCFVLACCLGAALPAPA.

This sequence belongs to the FapE family. In terms of assembly, a minor component of purified amyloid fibrils. Fibrils are resistant to boiling in 2% (weight/vol) SDS and require &gt;90% (vol/vol) formic acid to dissolve.

It localises to the fimbrium. The protein localises to the secreted. A minor component of the functional amyloid in this bacterium. Upon overexpression of the endogenous six-gene locus (fapA-fapF), cells form large clumps during liquid growth, make large amounts of biofilm and produce amyloid fibrils. The chain is Functional amyloid sbunit FapE from Pseudomonas aeruginosa (strain ATCC 15692 / DSM 22644 / CIP 104116 / JCM 14847 / LMG 12228 / 1C / PRS 101 / PAO1).